The chain runs to 430 residues: MKITINQASEFVGKEVTIGAWLANKRSSGKIAFLQLRDGTGFMQGVVVKAEVGDDIFATAKALTQETSLYVTGTINEDTRSPFGYEMAVSSVEVISESHDYPITPKEHGTEFLMDHRHLWLRSNRQHAIMKIRNEIIRASYEFFNKEGFLKIDPPILTGSAPEGTTELFHTKYFEEDAFLSQSGQLYMEAAAMAFGKVFSFGPTFRAEKSKTRRHLIEFWMIEPEMAFYKLEDSLQVQENYVAFLVKAVLDNCRLELDRLGRDVSHLEKMVAPFPRITYTEAIERLHELGFDDIVWGDDFGAPHETAIADSFEKPVFITHYPKAIKPFYMPEDPENDQVVLCADMIAPEGYGEIIGGSERIHDLETLQARMEDFDLDQEAYSWYLDLARYGSVPHSGFGLGLERTVAWISGTEHVRETIPFPRLLNRLYP.

This sequence belongs to the class-II aminoacyl-tRNA synthetase family. Homodimer.

The protein localises to the cytoplasm. The catalysed reaction is tRNA(Asn) + L-asparagine + ATP = L-asparaginyl-tRNA(Asn) + AMP + diphosphate + H(+). This Listeria monocytogenes serovar 1/2a (strain ATCC BAA-679 / EGD-e) protein is Asparagine--tRNA ligase.